We begin with the raw amino-acid sequence, 33 residues long: Nigrocin-1 (33 aa).

The cysteines at positions 27 and 33 are disulfide-linked.

It belongs to the frog skin active peptide (FSAP) family. Brevinin subfamily. In terms of tissue distribution, expressed by the skin dorsal glands.

Its subcellular location is the secreted. Shows antibacterial activity against both Gram-positive and Gram-negative bacteria and against the fungus C.albicans. Has no hemolytic activity. This chain is Nigrocin-1, found in Pelophylax nigromaculatus (Black-spotted frog).